We begin with the raw amino-acid sequence, 75 residues long: DNA-directed RNA polymerase subunit omega (75 aa).

It belongs to the RNA polymerase subunit omega family. As to quaternary structure, in cyanobacteria the RNAP catalytic core is composed of 2 alpha, 1 beta, 1 beta', 1 gamma and 1 omega subunit. When a sigma factor is associated with the core the holoenzyme is formed, which can initiate transcription.

The catalysed reaction is RNA(n) + a ribonucleoside 5'-triphosphate = RNA(n+1) + diphosphate. Its function is as follows. Promotes RNA polymerase assembly. Latches the N- and C-terminal regions of the beta' subunit thereby facilitating its interaction with the beta and alpha subunits. The sequence is that of DNA-directed RNA polymerase subunit omega from Synechococcus sp. (strain CC9311).